We begin with the raw amino-acid sequence, 449 residues long: Chromosomal replication initiator protein DnaA (449 aa).

The domain I, interacts with DnaA modulators stretch occupies residues methionine 1–threonine 83. The disordered stretch occupies residues glutamate 77–leucine 114. The interval threonine 83–serine 112 is domain II. Over residues alanine 89 to alanine 99 the composition is skewed to low complexity. Residues asparagine 113 to alanine 329 are domain III, AAA+ region. Glycine 157, glycine 159, lysine 160, and threonine 161 together coordinate ATP. Residues glutamine 330–threonine 449 form a domain IV, binds dsDNA region.

The protein belongs to the DnaA family. As to quaternary structure, oligomerizes as a right-handed, spiral filament on DNA at oriC.

It localises to the cytoplasm. Plays an essential role in the initiation and regulation of chromosomal replication. ATP-DnaA binds to the origin of replication (oriC) to initiate formation of the DNA replication initiation complex once per cell cycle. Binds the DnaA box (a 9 base pair repeat at the origin) and separates the double-stranded (ds)DNA. Forms a right-handed helical filament on oriC DNA; dsDNA binds to the exterior of the filament while single-stranded (ss)DNA is stabiized in the filament's interior. The ATP-DnaA-oriC complex binds and stabilizes one strand of the AT-rich DNA unwinding element (DUE), permitting loading of DNA polymerase. After initiation quickly degrades to an ADP-DnaA complex that is not apt for DNA replication. Binds acidic phospholipids. This Halorhodospira halophila (strain DSM 244 / SL1) (Ectothiorhodospira halophila (strain DSM 244 / SL1)) protein is Chromosomal replication initiator protein DnaA.